Here is a 433-residue protein sequence, read N- to C-terminus: MRMIDIIEKKRDGKSLTKEEIEFFVNGYTHGEVPDYQASSLAMAIFFQDMNDEERAALTMSMVNSGEKIDLSDINGIKVDKHSTGGVGDTTTLVLAPLVAAVGVPVAKMSGRGLGHTGGTIDKLESVKGFNVEISEKDFIKLVNDNQVAVIGQSGNLTPADKKLYALRDVTGTVNSIPLIASSIMSKKIAAGADAIVLDVKTGSGAFMKTLDDAEALAHAMVRIGNNVGRNTMAIISDMSQPLGNAIGNALELKEAIATLKGNGPKDLTELVLTLGSQMVVLAEQATSLDEARQMLIDAIKTGKALNKFKTFLSNQGGDDSIVDSPEKLPSAKYQVEFKAKKDGYITEIIANEIGVASMMLGAGRQTKEDVIDLGVGIVLNKKVGEHVEKGENILTIHTNTKEIDDILYKLDNSITIESKGEAPTLIHKIITE.

Position 81–83 (81–83) interacts with phosphate; it reads KHS. The K(+) site is built by Gly-88 and Thr-90. Phosphate contacts are provided by residues Thr-92, 108–110, and Thr-120; that span reads KMS. Substrate is bound by residues Arg-168 and Lys-187. Residues Leu-243, Ala-246, and Glu-255 each contribute to the K(+) site.

Belongs to the thymidine/pyrimidine-nucleoside phosphorylase family. Homodimer. It depends on K(+) as a cofactor.

It carries out the reaction uridine + phosphate = alpha-D-ribose 1-phosphate + uracil. It catalyses the reaction thymidine + phosphate = 2-deoxy-alpha-D-ribose 1-phosphate + thymine. The enzyme catalyses 2'-deoxyuridine + phosphate = 2-deoxy-alpha-D-ribose 1-phosphate + uracil. In terms of biological role, catalyzes phosphorolysis of the pyrimidine nucleosides uridine, thymidine and 2'-deoxyuridine with the formation of the corresponding pyrimidine base and ribose-1-phosphate. This Staphylococcus epidermidis (strain ATCC 35984 / DSM 28319 / BCRC 17069 / CCUG 31568 / BM 3577 / RP62A) protein is Pyrimidine-nucleoside phosphorylase (pdp).